The chain runs to 323 residues: ATP synthase gamma chain (323 aa).

The insert stretch occupies residues 206–240 (NPIVNLVGFGYKERGVKPINNRRATSDIVGESKSI).

It belongs to the ATPase gamma chain family. In terms of assembly, F-type ATPases have 2 components, CF(1) - the catalytic core - and CF(0) - the membrane proton channel. CF(1) has five subunits: alpha(3), beta(3), gamma(1), delta(1), epsilon(1). CF(0) has three main subunits: a, b and c.

Its subcellular location is the cell inner membrane. Produces ATP from ADP in the presence of a proton gradient across the membrane. The gamma chain is believed to be important in regulating ATPase activity and the flow of protons through the CF(0) complex. The sequence is that of ATP synthase gamma chain from Rickettsia conorii (strain ATCC VR-613 / Malish 7).